The following is a 405-amino-acid chain: Syndecan-3 (405 aa).

The signal sequence occupies residues 1–22 (MPAELRRLAVLLLLLSARAALA). Residues 23–347 (QPWRNENYER…PQKNILERKE (325 aa)) lie on the Extracellular side of the membrane. The segment at 31-59 (ERPVDLEGSGDDDPFGDDELDDIYSGSGS) is disordered. A compositionally biased stretch (acidic residues) spans 38-52 (GSGDDDPFGDDELDD). 5 O-linked (Xyl...) (glycosaminoglycan) serine glycosylation sites follow: serine 39, serine 55, serine 57, serine 59, and serine 66. Disordered stretches follow at residues 134–159 (TTTA…ATTT) and 191–301 (TRAT…ELGN). A compositionally biased stretch (low complexity) spans 191-201 (TRATTLETPTT). The span at 202 to 237 (SIPETSVLTEVTTSRLVPSSTAKPRSLPKPSTSRTA) shows a compositional bias: polar residues. O-linked (Xyl...) (glycosaminoglycan) serine glycosylation is found at serine 280, serine 283, and serine 330. Residues 348 to 372 (VLIAVIVGGVVGALFAAFLVMLLIY) traverse the membrane as a helical segment. The Cytoplasmic portion of the chain corresponds to 373 to 405 (RMKKKDEGSYTLEEPKQANVTYQKPDKQEEFYA).

Belongs to the syndecan proteoglycan family. In terms of processing, O-glycosylated within the Thr/Ser-rich region which could interact with lectin domains on other molecules. As to expression, proximal chondrogenic central core of embryonic limb buds where cartilage differentiation is being initiated.

The protein localises to the membrane. Its function is as follows. Cell surface proteoglycan that may bear both heparan sulfate and chondroitin sulfate. The multiple functional domains provide potential sites for mediating the adhesive cell-matrix interactions and cytoskeletal reorganization involved in limb chondrogenesis. Interaction with other matrix ligands as well as phosphorylation and shedding of the ectodomain might be involved in cell shape changes that occur during chondrogenesis. Furthermore, shedding of the ectodomain might break the adhesive interactions that promoted condensation, thus facilitating the deposition of cartilage matrix molecules. The chain is Syndecan-3 (SDC3) from Gallus gallus (Chicken).